The chain runs to 111 residues: Universal stress protein B (111 aa).

The helical transmembrane segment at 1–21 threads the bilayer; the sequence is MISTVSLFWALCVVCIVNMAR. Topologically, residues 22–89 are cytoplasmic; it reads YFSSLRALLV…IRRCERVRRQ (68 aa). Residues 90–110 traverse the membrane as a helical segment; it reads FLLTSALCGLVVVSLIALMIW. Histidine 111 is a topological domain (periplasmic).

This sequence belongs to the universal stress protein B family.

Its subcellular location is the cell inner membrane. This Salmonella choleraesuis (strain SC-B67) protein is Universal stress protein B (uspB).